The chain runs to 316 residues: Ribosomal RNA small subunit methyltransferase H (316 aa).

S-adenosyl-L-methionine is bound by residues 35–37, Asp55, Phe84, Asp105, and Gln112; that span reads AGH.

Belongs to the methyltransferase superfamily. RsmH family.

Its subcellular location is the cytoplasm. It carries out the reaction cytidine(1402) in 16S rRNA + S-adenosyl-L-methionine = N(4)-methylcytidine(1402) in 16S rRNA + S-adenosyl-L-homocysteine + H(+). Functionally, specifically methylates the N4 position of cytidine in position 1402 (C1402) of 16S rRNA. The polypeptide is Ribosomal RNA small subunit methyltransferase H (Streptococcus mutans serotype c (strain ATCC 700610 / UA159)).